Here is a 92-residue protein sequence, read N- to C-terminus: Small ribosomal subunit protein uS19c (92 aa).

This sequence belongs to the universal ribosomal protein uS19 family.

It localises to the plastid. Its subcellular location is the chloroplast. Protein S19 forms a complex with S13 that binds strongly to the 16S ribosomal RNA. The sequence is that of Small ribosomal subunit protein uS19c (rps19) from Porphyra purpurea (Red seaweed).